Here is a 222-residue protein sequence, read N- to C-terminus: Cytochrome b6-f complex iron-sulfur subunit, chloroplastic (222 aa).

The transit peptide at 1 to 49 (MASTALSTASNPTQLCRTRASSLCKPVKGLGFGRERIPRNITCMAGSIS) directs the protein to the chloroplast. Residues 66 to 86 (LLGAISLPTFGMLVPYGSFLV) traverse the membrane as a helical segment. One can recognise a Rieske domain in the interval 109–205 (VEDWLKTHGP…ADVDDGKVVF (97 aa)). Cys-151, His-153, Cys-169, and His-172 together coordinate [2Fe-2S] cluster. Cys-156 and Cys-171 are joined by a disulfide.

It belongs to the Rieske iron-sulfur protein family. The 4 large subunits of the cytochrome b6-f complex are cytochrome b6, subunit IV (17 kDa polypeptide, petD), cytochrome f and the Rieske protein, while the 4 small subunits are petG, petL, petM and petN. The complex functions as a dimer. [2Fe-2S] cluster serves as cofactor.

The protein resides in the plastid. It is found in the chloroplast thylakoid membrane. It carries out the reaction 2 oxidized [plastocyanin] + a plastoquinol + 2 H(+)(in) = 2 reduced [plastocyanin] + a plastoquinone + 4 H(+)(out). Component of the cytochrome b6-f complex, which mediates electron transfer between photosystem II (PSII) and photosystem I (PSI), cyclic electron flow around PSI, and state transitions. This chain is Cytochrome b6-f complex iron-sulfur subunit, chloroplastic (petC), found in Triticum aestivum (Wheat).